The primary structure comprises 289 residues: ATP synthase gamma chain (289 aa).

The protein belongs to the ATPase gamma chain family. F-type ATPases have 2 components, CF(1) - the catalytic core - and CF(0) - the membrane proton channel. CF(1) has five subunits: alpha(3), beta(3), gamma(1), delta(1), epsilon(1). CF(0) has three main subunits: a, b and c.

Its subcellular location is the cell inner membrane. Its function is as follows. Produces ATP from ADP in the presence of a proton gradient across the membrane. The gamma chain is believed to be important in regulating ATPase activity and the flow of protons through the CF(0) complex. This Coxiella burnetii (strain CbuG_Q212) (Coxiella burnetii (strain Q212)) protein is ATP synthase gamma chain.